The chain runs to 174 residues: Large ribosomal subunit protein uL10 (174 aa).

It belongs to the universal ribosomal protein uL10 family. In terms of assembly, part of the ribosomal stalk of the 50S ribosomal subunit. The N-terminus interacts with L11 and the large rRNA to form the base of the stalk. The C-terminus forms an elongated spine to which L12 dimers bind in a sequential fashion forming a multimeric L10(L12)X complex.

Functionally, forms part of the ribosomal stalk, playing a central role in the interaction of the ribosome with GTP-bound translation factors. The polypeptide is Large ribosomal subunit protein uL10 (Pelobacter propionicus (strain DSM 2379 / NBRC 103807 / OttBd1)).